A 201-amino-acid polypeptide reads, in one-letter code: Large ribosomal subunit protein uL4 (201 aa).

The segment at Arg44–Gly71 is disordered.

This sequence belongs to the universal ribosomal protein uL4 family. As to quaternary structure, part of the 50S ribosomal subunit.

One of the primary rRNA binding proteins, this protein initially binds near the 5'-end of the 23S rRNA. It is important during the early stages of 50S assembly. It makes multiple contacts with different domains of the 23S rRNA in the assembled 50S subunit and ribosome. In terms of biological role, forms part of the polypeptide exit tunnel. In Shigella flexneri serotype 5b (strain 8401), this protein is Large ribosomal subunit protein uL4.